The sequence spans 282 residues: D-alanine aminotransferase (282 aa).

Y32 is a substrate binding site. Pyridoxal 5'-phosphate is bound at residue R51. The substrate site is built by R99 and H101. K146 serves as the catalytic Proton acceptor. Position 146 is an N6-(pyridoxal phosphate)lysine (K146). E178 provides a ligand contact to pyridoxal 5'-phosphate.

It belongs to the class-IV pyridoxal-phosphate-dependent aminotransferase family. In terms of assembly, homodimer. It depends on pyridoxal 5'-phosphate as a cofactor.

It catalyses the reaction D-alanine + 2-oxoglutarate = D-glutamate + pyruvate. In terms of biological role, acts on the D-isomers of alanine, leucine, aspartate, glutamate, aminobutyrate, norvaline and asparagine. The enzyme transfers an amino group from a substrate D-amino acid to the pyridoxal phosphate cofactor to form pyridoxamine and an alpha-keto acid in the first half-reaction. The second half-reaction is the reverse of the first, transferring the amino group from the pyridoxamine to a second alpha-keto acid to form the product D-amino acid via a ping-pong mechanism. This is an important process in the formation of D-alanine and D-glutamate, which are essential bacterial cell wall components. This chain is D-alanine aminotransferase (dat), found in Staphylococcus epidermidis (strain ATCC 35984 / DSM 28319 / BCRC 17069 / CCUG 31568 / BM 3577 / RP62A).